Reading from the N-terminus, the 111-residue chain is P antigen family member 2 (111 aa).

A disordered region spans residues 1-66 (MSELLRARSQ…NQAVPAFQGP (66 aa)). Positions 8 to 24 (RSQSSERGNDQESSQPV) are enriched in polar residues.

It belongs to the GAGE family.

This is P antigen family member 2 (PAGE2) from Homo sapiens (Human).